A 178-amino-acid polypeptide reads, in one-letter code: MNATPEKADDLIVVGKIFSVHGVRGEVKVYSFTDPIENLLDYPRWTLRHEGKVKQVELVSGRGSQKGLVVKLKGLDDRDEARLLSGFEICIPRSLLPNLAADEYYWYQLQGLKVINQDEQLFGKVDHLLETGANDVMVVKPCAGSLDDRERLLPYTAQCVLAIDLEAGVMRVEWDADF.

A PRC barrel domain is found at 100–178 (AADEYYWYQL…VMRVEWDADF (79 aa)).

This sequence belongs to the RimM family. As to quaternary structure, binds ribosomal protein uS19.

It is found in the cytoplasm. In terms of biological role, an accessory protein needed during the final step in the assembly of 30S ribosomal subunit, possibly for assembly of the head region. Essential for efficient processing of 16S rRNA. May be needed both before and after RbfA during the maturation of 16S rRNA. It has affinity for free ribosomal 30S subunits but not for 70S ribosomes. This chain is Ribosome maturation factor RimM, found in Pseudomonas putida (strain W619).